The chain runs to 642 residues: Kinesin-like protein KIF12 (642 aa).

The span at 1-13 (MEERGSPDGDPAR) shows a compositional bias: basic and acidic residues. A disordered region spans residues 1 to 25 (MEERGSPDGDPARNLEQGPEGSETP). Residue Ser-6 is modified to Phosphoserine. One can recognise a Kinesin motor domain in the interval 25–360 (PIQVVLRVRP…LRYASRAQRI (336 aa)). 104 to 111 (GQTGSGKT) lines the ATP pocket. Phosphoserine is present on Ser-369. A coiled-coil region spans residues 376-465 (QQVENELLRL…QVHDLERRLL (90 aa)). Disordered regions lie at residues 531–561 (GHIS…SQSD) and 579–642 (PSAP…LSSC). Pro residues predominate over residues 538–548 (WPPPWAPPPSP). A compositionally biased stretch (polar residues) spans 610–642 (TLTQQINSSLHLSQRQPQPSEDTQSPGQGLSSC). Ser-634 is subject to Phosphoserine.

It belongs to the TRAFAC class myosin-kinesin ATPase superfamily. Kinesin family. As to expression, expressed in the liver.

It localises to the cytoplasm. The protein resides in the cytoskeleton. The sequence is that of Kinesin-like protein KIF12 (Kif12) from Mus musculus (Mouse).